Consider the following 527-residue polypeptide: Coproporphyrinogen III oxidase (527 aa).

Low complexity predominate over residues 1–14 (MSTTDRVTTPTPTV). Residues 1–23 (MSTTDRVTTPTPTVSGTDAPGPD) are disordered. FAD-binding positions include 33 to 38 (GGGITG), 56 to 57 (ES), Lys-64, and 78 to 81 (GPDS). The tract at residues 231–267 (RRAARQRAAQNNAQQNSSHQNSTGQNNSAGTRGPAAS) is disordered. Residues 236 to 252 (QRAAQNNAQQNSSHQNS) are compositionally biased toward low complexity. Residues Val-300, Trp-448, and 487–489 (VGL) contribute to the FAD site.

This sequence belongs to the protoporphyrinogen/coproporphyrinogen oxidase family. Coproporphyrinogen III oxidase subfamily. FAD is required as a cofactor.

The protein localises to the cytoplasm. It carries out the reaction coproporphyrinogen III + 3 O2 = coproporphyrin III + 3 H2O2. The protein operates within porphyrin-containing compound metabolism; protoheme biosynthesis. Functionally, involved in coproporphyrin-dependent heme b biosynthesis. Catalyzes the oxidation of coproporphyrinogen III to coproporphyrin III. This chain is Coproporphyrinogen III oxidase, found in Propionibacterium freudenreichii subsp. freudenreichii.